The primary structure comprises 108 residues: ADM5 (108 aa).

An N-terminal signal peptide occupies residues 1 to 18; the sequence is MTAHILLLWLFASSILGD. A propeptide spanning residues 19 to 25 is cleaved from the precursor; the sequence is PDSAGRL. Cys38 and Cys43 are disulfide-bonded. The interval 61–108 is disordered; the sequence is KELSGKAGRKPQDPYSYGRRRRRRRRRREARLLRRLQDPSLRRAQLAG. A Tyrosine amide modification is found at Tyr77. The span at 78–89 shows a compositional bias: basic residues; sequence GRRRRRRRRRRE. Residues 89-108 constitute a propeptide that is removed on maturation; that stretch reads EARLLRRLQDPSLRRAQLAG. Basic and acidic residues predominate over residues 90–101; that stretch reads ARLLRRLQDPSL.

It belongs to the adrenomedullin family. As to expression, expressed abundantly in the spleen and thymus. Also expressed in adrenal and pituitary. Not expressed in brain, heart, kidney, liver and stomach.

Its subcellular location is the secreted. Its function is as follows. Seems to have a peripheral vasodepressor effect and a central vasopressor effect. This chain is ADM5 (ADM5), found in Sus scrofa (Pig).